The following is a 550-amino-acid chain: Acetyl-coenzyme A transporter 1 (550 aa).

The Cytoplasmic portion of the chain corresponds to 1 to 74 (MSPTISHKDN…KRSYRAELSS (74 aa)). Ser-42 is subject to Phosphoserine. The chain crosses the membrane as a helical span at residues 75–95 (ILLLLFLYVLQGIPLGLAGSI). At 96-113 (PLILQSKNVSYTDQAFFS) the chain is on the extracellular side. The N-linked (GlcNAc...) asparagine glycan is linked to Asn-103. The chain crosses the membrane as a helical span at residues 114–134 (FVFWPFSLKLLWAPLVDAVYF). Residues 135 to 141 (KNFGRRK) lie on the Cytoplasmic side of the membrane. Residues 142-162 (SWLVPTQYILGIFMIYLSTQV) form a helical membrane-spanning segment. Residues 163-256 (DRLLGNIDGR…FQPQPRGIVT (94 aa)) lie on the Extracellular side of the membrane. The chain crosses the membrane as a helical span at residues 257–277 (LSDFLFFWGTVFLITTTLVAL). The Cytoplasmic segment spans residues 278–300 (LKKETREASVVKEETQGITDTYK). Residues 301 to 321 (LLFSIIKMPAVLAFCLLILTS) traverse the membrane as a helical segment. The Extracellular portion of the chain corresponds to 322 to 344 (KIGFSAADAVTGLKLVEEGVPKE). The chain crosses the membrane as a helical span at residues 345-365 (HLALLAVPMVPLQIILPLLIS). Over 366-375 (KYTAGPQPLN) the chain is Cytoplasmic. A helical membrane pass occupies residues 376–396 (IFYKAMPYRLLLGLEYALLVW). Residues 397-405 (WTPKVEHQG) lie on the Extracellular side of the membrane. A helical transmembrane segment spans residues 406-426 (GFPIYYYIIVLLSYALHQVTL). Topologically, residues 427-509 (YSMYVSIMAF…LGGSCVTALD (83 aa)) are cytoplasmic. The chain crosses the membrane as a helical span at residues 510–530 (GYYVESIVCVLIGFGWWFFLG). Residues 531–550 (PKFKKLQDEGPSSWKCKRTN) are Extracellular-facing.

This sequence belongs to the SLC33A transporter family. In terms of assembly, homodimerizes. As to expression, expressed in brain at all developmental stages. Detected in hippocampus, hypothalamus, cerebellum, cortex, olfactory bulb, and the ventral and dorsal anterior olfactory nucleus.

Its subcellular location is the endoplasmic reticulum membrane. It carries out the reaction acetyl-CoA(in) = acetyl-CoA(out). Functionally, acetyl-CoA transporter that mediates active acetyl-CoA import through the endoplasmic reticulum (ER) membrane into the ER lumen where specific ER-based acetyl-CoA:lysine acetyltransferases are responsible for the acetylation of ER-based protein substrates, such as BACE1. Necessary for O-acetylation of gangliosides. The polypeptide is Acetyl-coenzyme A transporter 1 (Slc33a1) (Rattus norvegicus (Rat)).